We begin with the raw amino-acid sequence, 274 residues long: 2,3,4,5-tetrahydropyridine-2,6-dicarboxylate N-succinyltransferase (274 aa).

The protein belongs to the transferase hexapeptide repeat family.

It localises to the cytoplasm. It carries out the reaction (S)-2,3,4,5-tetrahydrodipicolinate + succinyl-CoA + H2O = (S)-2-succinylamino-6-oxoheptanedioate + CoA. Its pathway is amino-acid biosynthesis; L-lysine biosynthesis via DAP pathway; LL-2,6-diaminopimelate from (S)-tetrahydrodipicolinate (succinylase route): step 1/3. This Shigella boydii serotype 18 (strain CDC 3083-94 / BS512) protein is 2,3,4,5-tetrahydropyridine-2,6-dicarboxylate N-succinyltransferase.